We begin with the raw amino-acid sequence, 256 residues long: Thrombin-like enzyme cerastocytin (256 aa).

Positions 1–18 (MVLISVLASLLVLQLSYA) are cleaved as a signal peptide. A propeptide spanning residues 19-24 (QKSSEL) is cleaved from the precursor. The region spanning 25–247 (VIGGAECNIN…YTDWIRNIIA (223 aa)) is the Peptidase S1 domain. Disulfide bonds link Cys-31–Cys-161, Cys-98–Cys-254, Cys-140–Cys-208, Cys-172–Cys-187, and Cys-198–Cys-223. N-linked (GlcNAc...) asparagine glycosylation is present at Asn-44. Residues His-65 and Asp-108 each act as charge relay system in the active site. 3 N-linked (GlcNAc...) asparagine glycosylation sites follow: Asn-119, Asn-120, and Asn-152. Catalysis depends on Ser-202, which acts as the Charge relay system.

The protein belongs to the peptidase S1 family. Snake venom subfamily. In terms of assembly, monomer. In terms of tissue distribution, expressed by the venom gland.

The protein resides in the secreted. With respect to regulation, its platelets aggregating activity is inhibited by chlorpromazine, theophylline mepacrine. Its platelet aggregating activity and its amidolytic activity are inhibited by PMSF, TPCK, TLCK and soybean trypsin inhibitors. Is unaffected by hirudin or by antithrombin-III in the presence of heparin. In terms of biological role, thrombin-like snake venom serine protease which potently induces platelet aggregation and has fibrinogenolytic activities. Clots purified fibrinogen and hydrolyzes alpha-chains (FGA). High concentrations of this enzyme also cleave prothrombin (F2) and factor X (F10). Is also able to activate factor XIII (F8). This Cerastes cerastes (Horned desert viper) protein is Thrombin-like enzyme cerastocytin.